The following is a 239-amino-acid chain: Probable transcriptional regulatory protein lin0388 (239 aa).

Belongs to the TACO1 family. YeeN subfamily.

The protein localises to the cytoplasm. This is Probable transcriptional regulatory protein lin0388 from Listeria innocua serovar 6a (strain ATCC BAA-680 / CLIP 11262).